A 284-amino-acid polypeptide reads, in one-letter code: MEMO1 family protein Saci_0089 (284 aa).

It belongs to the MEMO1 family.

The chain is MEMO1 family protein Saci_0089 from Sulfolobus acidocaldarius (strain ATCC 33909 / DSM 639 / JCM 8929 / NBRC 15157 / NCIMB 11770).